Reading from the N-terminus, the 503-residue chain is Alpha-1,3/1,6-mannosyltransferase ALG2 (503 aa).

Helical transmembrane passes span 64 to 84 and 112 to 132; these read VYGD…FATI and TCIP…CHFP. Residues asparagine 170, asparagine 303, asparagine 371, and asparagine 400 are each glycosylated (N-linked (GlcNAc...) asparagine). A helical transmembrane segment spans residues 443–463; that stretch reads WEIFGISFSNFILHMAFIKIL.

It belongs to the glycosyltransferase group 1 family. Glycosyltransferase 4 subfamily. As to quaternary structure, interacts with ALG1.

Its subcellular location is the endoplasmic reticulum membrane. The catalysed reaction is a beta-D-Man-(1-&gt;4)-beta-D-GlcNAc-(1-&gt;4)-alpha-D-GlcNAc-diphospho-di-trans,poly-cis-dolichol + GDP-alpha-D-mannose = an alpha-D-Man-(1-&gt;3)-beta-D-Man-(1-&gt;4)-beta-D-GlcNAc-(1-&gt;4)-alpha-D-GlcNAc-diphospho-di-trans,poly-cis-dolichol + GDP + H(+). It carries out the reaction an alpha-D-Man-(1-&gt;3)-beta-D-Man-(1-&gt;4)-beta-D-GlcNAc-(1-&gt;4)-alpha-D-GlcNAc-diphospho-di-trans,poly-cis-dolichol + GDP-alpha-D-mannose = an alpha-D-Man-(1-&gt;3)-[alpha-D-Man-(1-&gt;6)]-beta-D-Man-(1-&gt;4)-beta-D-GlcNAc-(1-&gt;4)-alpha-D-GlcNAc-diphospho-di-trans,poly-cis-dolichol + GDP + H(+). The protein operates within protein modification; protein glycosylation. In terms of biological role, mannosylates Man(2)GlcNAc(2)-dolichol diphosphate and Man(1)GlcNAc(2)-dolichol diphosphate to form Man(3)GlcNAc(2)-dolichol diphosphate. The polypeptide is Alpha-1,3/1,6-mannosyltransferase ALG2 (ALG2) (Saccharomyces cerevisiae (strain ATCC 204508 / S288c) (Baker's yeast)).